A 531-amino-acid polypeptide reads, in one-letter code: Poly(A)-specific ribonuclease PNLDC1 (531 aa).

Mg(2+) is bound by residues aspartate 28, glutamate 30, aspartate 271, and aspartate 365. A helical transmembrane segment spans residues isoleucine 506–leucine 526.

Belongs to the CAF1 family. Requires Mg(2+) as cofactor. In terms of tissue distribution, specifically expressed in embryonic stem cells. Highly expressed in testis.

It is found in the endoplasmic reticulum membrane. It catalyses the reaction Exonucleolytic cleavage of poly(A) to 5'-AMP.. In terms of biological role, 3'-exoribonuclease that has a preference for poly(A) tails of mRNAs, thereby efficiently degrading poly(A) tails. Exonucleolytic degradation of the poly(A) tail is often the first step in the decay of eukaryotic mRNAs and is also used to silence certain maternal mRNAs translationally during oocyte maturation and early embryonic development. May act as a regulator of multipotency in embryonic stem cells. Is a critical factor for proper spermatogenesis, involved in pre-piRNAs processing to generate mature piRNAs. The sequence is that of Poly(A)-specific ribonuclease PNLDC1 from Mus musculus (Mouse).